A 231-amino-acid chain; its full sequence is PIAGSMVLAAVLLKLGGYGIIRMMQTLPTTKTDMFLPFIVLALWGAILANLTCLQQTDLKSLIAYSSISHMGLVVAAIIIQTPWGLSGAMALMIAHGFTSSALFCLANTTYERTHTRILILTRGFHNILPMTTTWWLLANLMNIATPPTLNFTSELLIMSTLFNWCPTTIILLGLSMLITASYSLHMFLSTQMGPTLLNNQTEPMHSREHLLMALHLVPLMMISMKPELII.

The next 7 membrane-spanning stretches (helical) occupy residues 1-21, 34-54, 63-85, 89-111, 128-148, 169-189, and 211-231; these read PIAG…YGII, MFLP…LTCL, IAYS…TPWG, AMAL…NTTY, ILPM…ATPP, TIIL…HMFL, and LLMA…ELII.

The protein belongs to the complex I subunit 4 family.

It is found in the mitochondrion membrane. It carries out the reaction a ubiquinone + NADH + 5 H(+)(in) = a ubiquinol + NAD(+) + 4 H(+)(out). Its function is as follows. Core subunit of the mitochondrial membrane respiratory chain NADH dehydrogenase (Complex I) that is believed to belong to the minimal assembly required for catalysis. Complex I functions in the transfer of electrons from NADH to the respiratory chain. The immediate electron acceptor for the enzyme is believed to be ubiquinone. The chain is NADH-ubiquinone oxidoreductase chain 4 (MT-ND4) from Cerrophidion godmani (Porthidium godmani).